The following is a 327-amino-acid chain: DNA repair protein XRCC4 (327 aa).

Residues 1–211 are interaction with IFFO1; the sequence is MERKVSRISL…QLEKNLKPER (211 aa). A Phosphoserine modification is found at Ser53. Coiled coils occupy residues 133-153 and 183-213; these read IAEK…LLRD and LNEK…ERET. Interaction with LIG4 stretches follow at residues 179–210 and 179–211; these read FILV…LKPE and FILV…KPER. At Ser192 the chain carries Phosphoserine. Lys208 is covalently cross-linked (Glycyl lysine isopeptide (Lys-Gly) (interchain with G-Cter in SUMO)). Tyr226 bears the Phosphotyrosine mark. The residue at position 229 (Ser229) is a Phosphoserine. At Thr230 the chain carries Phosphothreonine. Residues Ser249 and Ser253 each carry the phosphoserine modification. The disordered stretch occupies residues 255–327; it reads DVTDIAPSRK…RNSSPEDIFD (73 aa). A Nuclear localization signal motif is present at residues 263 to 268; that stretch reads RKRRHH. Lys289 participates in a covalent cross-link: Glycyl lysine isopeptide (Lys-Gly) (interchain with G-Cter in ubiquitin). 4 positions are modified to phosphoserine: Ser294, Ser295, Ser308, and Ser313. The segment covering 308-327 has biased composition (polar residues); the sequence is SAGNMSLETLRNSSPEDIFD. The residue at position 316 (Thr316) is a Phosphothreonine. Phosphoserine is present on residues Ser320 and Ser321.

It belongs to the XRCC4-XLF family. XRCC4 subfamily. As to quaternary structure, homodimer and homotetramer in solution. Interacts with NHEJ1/XLF; the interaction is direct and is mediated via a head-to-head interaction between N-terminal head regions. Interacts with LIG4; the LIG4-XRCC4 subcomplex has a 1:2 stoichiometry and XRCC4 is required for LIG4 stability. Component of the core long-range non-homologous end joining (NHEJ) complex (also named DNA-PK complex) composed of PRKDC, LIG4, XRCC4, XRCC6/Ku70, XRCC5/Ku86 and NHEJ1/XLF. Additional component of the NHEJ complex includes PAXX. Following autophosphorylation, PRKDC dissociates from DNA, leading to formation of the short-range NHEJ complex, composed of LIG4, XRCC4, XRCC6/Ku70, XRCC5/Ku86 and NHEJ1/XLF. Interacts with PRKDC; the interaction is direct. Interacts with XRCC6/Ku70; the interaction is direct. Interacts with APTX and APLF. Forms a heterotetramer with IFFO1; the interaction involves LIG4-free XRCC4 and leads to the relocalization of IFFO1 to the sites of DNA damage. Interacts with PNKP; mainly interacts with PNKP when phosphorylated at Thr-230, but is also able to interact at much lower level with PNKP when not unphosphorylated. Interacts with POLL (DNA polymerase lambda). In terms of assembly, interacts with XKR4; interacts with the processed form of XKR4, which is cleaved by caspase. In terms of processing, phosphorylated by PRKDC at the C-terminus in response to DNA damage; Ser-253 constitutes the main phosphorylation sites. Phosphorylations by PRKDC at the C-terminus of XRCC4 and NHEJ1/XLF are highly redundant and regulate ability of the XRCC4-NHEJ1/XLF subcomplex to bridge DNA. Phosphorylation by PRKDC does not prevent interaction with NHEJ1/XLF but disrupts ability to bridge DNA and promotes detachment from DNA. Phosphorylation at Ser-320 and Ser-321 by PRKDC promotes recognition by the SCF(FBXW7) complex and subsequent ubiquitination via 'Lys-63'-linked ubiquitin. Phosphorylation at Thr-230 by CK2 promotes interaction with PNKP; regulating PNKP activity and localization to DNA damage sites. Phosphorylation by CK2 promotes interaction with APTX. Ubiquitinated at Lys-289 by the SCF(FBXW7) complex via 'Lys-63'-linked ubiquitination, thereby promoting double-strand break repair: the SCF(FBXW7) complex specifically recognizes XRCC4 when phosphorylated at Ser-320 and Ser-321 by PRKDC, and 'Lys-63'-linked ubiquitination facilitates DNA non-homologous end joining (NHEJ) by enhancing association with XRCC5/Ku80 and XRCC6/Ku70. Monoubiquitinated. Post-translationally, undergoes proteolytic processing by caspase-3 (CASP3). This generates the protein XRCC4, C-terminus (XRCC4/C), which translocates to the cytoplasm and activates phospholipid scramblase activity of XKR4, thereby promoting phosphatidylserine exposure on apoptotic cell surface.

The protein resides in the nucleus. It localises to the chromosome. It is found in the cytoplasm. In terms of biological role, DNA non-homologous end joining (NHEJ) core factor, required for double-strand break repair and V(D)J recombination. Acts as a scaffold protein that regulates recruitment of other proteins to DNA double-strand breaks (DSBs). Associates with NHEJ1/XLF to form alternating helical filaments that bridge DNA and act like a bandage, holding together the broken DNA until it is repaired. The XRCC4-NHEJ1/XLF subcomplex binds to the DNA fragments of a DSB in a highly diffusive manner and robustly bridges two independent DNA molecules, holding the broken DNA fragments in close proximity to one other. The mobility of the bridges ensures that the ends remain accessible for further processing by other repair factors. Plays a key role in the NHEJ ligation step of the broken DNA during DSB repair via direct interaction with DNA ligase IV (LIG4): the LIG4-XRCC4 subcomplex reseals the DNA breaks after the gap filling is completed. XRCC4 stabilizes LIG4, regulates its subcellular localization and enhances LIG4's joining activity. Binding of the LIG4-XRCC4 subcomplex to DNA ends is dependent on the assembly of the DNA-dependent protein kinase complex DNA-PK to these DNA ends. Promotes displacement of PNKP from processed strand break termini. Acts as an activator of the phospholipid scramblase activity of XKR4. This form, which is generated upon caspase-3 (CASP3) cleavage, translocates into the cytoplasm and interacts with XKR4, thereby promoting phosphatidylserine scramblase activity of XKR4 and leading to phosphatidylserine exposure on apoptotic cell surface. The polypeptide is DNA repair protein XRCC4 (Cricetulus griseus (Chinese hamster)).